Here is a 283-residue protein sequence, read N- to C-terminus: Thymidylate synthase (283 aa).

Arg-22 provides a ligand contact to dUMP. The active-site Nucleophile is Cys-160. DUMP contacts are provided by residues 180-183, Asn-191, and 221-223; these read RSCD and HIY. Asp-183 lines the (6R)-5,10-methylene-5,6,7,8-tetrahydrofolate pocket. Position 282 (Ser-282) interacts with (6R)-5,10-methylene-5,6,7,8-tetrahydrofolate.

This sequence belongs to the thymidylate synthase family. Bacterial-type ThyA subfamily. As to quaternary structure, homodimer.

It is found in the cytoplasm. The catalysed reaction is dUMP + (6R)-5,10-methylene-5,6,7,8-tetrahydrofolate = 7,8-dihydrofolate + dTMP. The protein operates within pyrimidine metabolism; dTTP biosynthesis. Catalyzes the reductive methylation of 2'-deoxyuridine-5'-monophosphate (dUMP) to 2'-deoxythymidine-5'-monophosphate (dTMP) while utilizing 5,10-methylenetetrahydrofolate (mTHF) as the methyl donor and reductant in the reaction, yielding dihydrofolate (DHF) as a by-product. This enzymatic reaction provides an intracellular de novo source of dTMP, an essential precursor for DNA biosynthesis. The polypeptide is Thymidylate synthase (Psychromonas ingrahamii (strain DSM 17664 / CCUG 51855 / 37)).